We begin with the raw amino-acid sequence, 114 residues long: Fructose-bisphosphate aldolase 2 (114 aa).

35–38 (NIDT) provides a ligand contact to dihydroxyacetone phosphate.

This sequence belongs to the class II fructose-bisphosphate aldolase family. As to quaternary structure, homodimer. Zn(2+) is required as a cofactor.

It catalyses the reaction beta-D-fructose 1,6-bisphosphate = D-glyceraldehyde 3-phosphate + dihydroxyacetone phosphate. The protein operates within carbohydrate biosynthesis; Calvin cycle. It participates in carbohydrate degradation; glycolysis; D-glyceraldehyde 3-phosphate and glycerone phosphate from D-glucose: step 4/4. In terms of biological role, catalyzes the aldol condensation of dihydroxyacetone phosphate (DHAP or glycerone-phosphate) with glyceraldehyde 3-phosphate (G3P) to form fructose 1,6-bisphosphate (FBP) in gluconeogenesis and the reverse reaction in glycolysis. The protein is Fructose-bisphosphate aldolase 2 (cbbA) of Rhodobacter capsulatus (Rhodopseudomonas capsulata).